The following is a 333-amino-acid chain: DNA primase small subunit PriS (333 aa).

Active-site residues include Asp96, Asp98, and Asp237.

The protein belongs to the eukaryotic-type primase small subunit family. In terms of assembly, heterodimer of a small subunit (PriS) and a large subunit (PriL). It depends on Mg(2+) as a cofactor. The cofactor is Mn(2+).

In terms of biological role, catalytic subunit of DNA primase, an RNA polymerase that catalyzes the synthesis of short RNA molecules used as primers for DNA polymerase during DNA replication. The small subunit contains the primase catalytic core and has DNA synthesis activity on its own. Binding to the large subunit stabilizes and modulates the activity, increasing the rate of DNA synthesis while decreasing the length of the DNA fragments, and conferring RNA synthesis capability. The DNA polymerase activity may enable DNA primase to also catalyze primer extension after primer synthesis. May also play a role in DNA repair. This Thermoplasma volcanium (strain ATCC 51530 / DSM 4299 / JCM 9571 / NBRC 15438 / GSS1) protein is DNA primase small subunit PriS.